The chain runs to 619 residues: Magnesium-chelatase 67 kDa subunit (619 aa).

Residue 33–40 participates in ATP binding; that stretch reads STVGSGKS. Residues 273–321 are disordered; that stretch reads TRMPEREPSEEEMQQEEPPPPEEQPEQEGEDENAPPDETDSDADEEQEE. A compositionally biased stretch (acidic residues) spans 280–321; it reads PSEEEMQQEEPPPPEEQPEQEGEDENAPPDETDSDADEEQEE. Residues 431–619 enclose the VWFA domain; sequence LFIFMVDASG…AEQIVEAALS (189 aa).

It belongs to the Mg-chelatase subunits D/I family.

It catalyses the reaction protoporphyrin IX + Mg(2+) + ATP + H2O = Mg-protoporphyrin IX + ADP + phosphate + 3 H(+). It participates in porphyrin-containing compound metabolism; bacteriochlorophyll biosynthesis. Involved in bacteriochlorophyll biosynthesis; introduces a magnesium ion into protoporphyrin IX to yield Mg-protoporphyrin IX. This is Magnesium-chelatase 67 kDa subunit (bchD) from Chlorobaculum parvum (strain DSM 263 / NCIMB 8327) (Chlorobium vibrioforme subsp. thiosulfatophilum).